Here is a 714-residue protein sequence, read N- to C-terminus: ABC transporter B family member 28 (714 aa).

5 consecutive transmembrane segments (helical) span residues leucine 109–phenylalanine 129, isoleucine 161–leucine 181, isoleucine 240–alanine 260, valine 340–glycine 360, and glutamate 361–valine 381. The 285-residue stretch at leucine 109–glycine 393 folds into the ABC transmembrane type-1 domain. The region spanning valine 470–threonine 708 is the ABC transporter domain. Glycine 505–serine 512 provides a ligand contact to ATP.

The protein belongs to the ABC transporter superfamily. ABCB family. Multidrug resistance exporter (TC 3.A.1.201) subfamily.

Its subcellular location is the membrane. In Arabidopsis thaliana (Mouse-ear cress), this protein is ABC transporter B family member 28 (ABCB28).